A 337-amino-acid chain; its full sequence is Ketol-acid reductoisomerase (NADP(+)) (337 aa).

In terms of domain architecture, KARI N-terminal Rossmann spans Met1 to Thr181. NADP(+) contacts are provided by residues Phe24–Gln27, Arg47, Ser50, Ser52, and Asp82–Gln85. Residue His107 is part of the active site. Gly133 provides a ligand contact to NADP(+). Residues Thr182–Leu328 enclose the KARI C-terminal knotted domain. Residues Asp190, Glu194, Glu226, and Glu230 each coordinate Mg(2+). Position 251 (Ser251) interacts with substrate.

Belongs to the ketol-acid reductoisomerase family. The cofactor is Mg(2+).

The catalysed reaction is (2R)-2,3-dihydroxy-3-methylbutanoate + NADP(+) = (2S)-2-acetolactate + NADPH + H(+). It carries out the reaction (2R,3R)-2,3-dihydroxy-3-methylpentanoate + NADP(+) = (S)-2-ethyl-2-hydroxy-3-oxobutanoate + NADPH + H(+). The protein operates within amino-acid biosynthesis; L-isoleucine biosynthesis; L-isoleucine from 2-oxobutanoate: step 2/4. It functions in the pathway amino-acid biosynthesis; L-valine biosynthesis; L-valine from pyruvate: step 2/4. Involved in the biosynthesis of branched-chain amino acids (BCAA). Catalyzes an alkyl-migration followed by a ketol-acid reduction of (S)-2-acetolactate (S2AL) to yield (R)-2,3-dihydroxy-isovalerate. In the isomerase reaction, S2AL is rearranged via a Mg-dependent methyl migration to produce 3-hydroxy-3-methyl-2-ketobutyrate (HMKB). In the reductase reaction, this 2-ketoacid undergoes a metal-dependent reduction by NADPH to yield (R)-2,3-dihydroxy-isovalerate. In Thermus thermophilus (strain ATCC BAA-163 / DSM 7039 / HB27), this protein is Ketol-acid reductoisomerase (NADP(+)).